The chain runs to 117 residues: Large ribosomal subunit protein bL20 (117 aa).

It belongs to the bacterial ribosomal protein bL20 family.

Its function is as follows. Binds directly to 23S ribosomal RNA and is necessary for the in vitro assembly process of the 50S ribosomal subunit. It is not involved in the protein synthesizing functions of that subunit. The protein is Large ribosomal subunit protein bL20 of Rickettsia massiliae (strain Mtu5).